The following is a 593-amino-acid chain: Phosphoinositide phosphatase SAC6 (593 aa).

One can recognise an SAC domain in the interval 128 to 456; that stretch reads LSVAERTTGL…GDDISIQYSG (329 aa). The Phosphatase catalytic core signature appears at 391–402; it reads RTNCIDCLDRTN. The next 2 helical transmembrane spans lie at 526-546 and 555-575; these read AVANFPVALTVILISFWFATM and YKHLLFSLVWAGISVAVAALV.

As to expression, predominantly expressed in flowers.

The protein resides in the endoplasmic reticulum membrane. Functionally, phosphoinositide phosphatase that hydrolyzes PtdIns(3)P and PtdIns(4)P. Involved in priming for different defense responses. This chain is Phosphoinositide phosphatase SAC6 (SAC6), found in Arabidopsis thaliana (Mouse-ear cress).